The following is a 631-amino-acid chain: MPTTFHEIPRERPLTPLLDSANTPDELRRLAEADLETLADELRQYLLYSVGQSGGHFGAGLGVIELTIALHYVFDTPDDRLVWDVGHQAYPHKILTGRRERMGSLRQKDGLAAFPRRSESEYDTFGVGHSSTSISAALGMAIAARLKGEKRKSVAVIGDGALTAGMAFEALNHATDVGANMLVILNDNDMSISKNVGGLSNYLAKIISSRTYASMREGSKKILSRLPGAWEIARKVEEHAKGMLVPGTLFEELGWNYVGPIDGHDLPTLLATLRNMRDLDGPQFLHVVTKKGKGFAPAEADPIGYHAITKLEPVTPSAVPRKPSGPKYSNVFGQWLCDMAAADQRLVGITPAMKEGSDLVAFAERFPERYFDVAIAEQHAVTLAAGMACDGVKPVVAIYSTFLQRAYDQLIHDVAVQNLDVLFAIDRAGLVGEDGPTHAGSFDISYLRCIPGMLVMTPSDENELRRMLTTGYLFDGPAAVRYPRGSGPNAPLDAGLELLEIGKAIVRRQGKGAALLVFGVQLAEALQVGEALNATVVDMRFVKPLDEALLRELAGSHELLVTIEENAVMGGAGSAVSEFLAAQNIIKPLLHLGLPDYYVEHAKPAQMLAECGLDQAGIERAVRERLDQLRA.

Residues 1-21 (MPTTFHEIPRERPLTPLLDSA) form a disordered region. Thiamine diphosphate-binding positions include His87 and 128-130 (GHS). Residue Asp159 coordinates Mg(2+). Residues 160–161 (GA), Asn188, Phe295, and Glu377 each bind thiamine diphosphate. Mg(2+) is bound at residue Asn188.

Belongs to the transketolase family. DXPS subfamily. In terms of assembly, homodimer. It depends on Mg(2+) as a cofactor. Thiamine diphosphate is required as a cofactor.

It carries out the reaction D-glyceraldehyde 3-phosphate + pyruvate + H(+) = 1-deoxy-D-xylulose 5-phosphate + CO2. The protein operates within metabolic intermediate biosynthesis; 1-deoxy-D-xylulose 5-phosphate biosynthesis; 1-deoxy-D-xylulose 5-phosphate from D-glyceraldehyde 3-phosphate and pyruvate: step 1/1. In terms of biological role, catalyzes the acyloin condensation reaction between C atoms 2 and 3 of pyruvate and glyceraldehyde 3-phosphate to yield 1-deoxy-D-xylulose-5-phosphate (DXP). This is 1-deoxy-D-xylulose-5-phosphate synthase from Ectopseudomonas mendocina (strain ymp) (Pseudomonas mendocina).